The sequence spans 414 residues: DNA primase small subunit PriS (414 aa).

Catalysis depends on residues D98, D100, and D312.

It belongs to the eukaryotic-type primase small subunit family. As to quaternary structure, heterodimer of a small subunit (PriS) and a large subunit (PriL). It depends on Mg(2+) as a cofactor. The cofactor is Mn(2+).

Catalytic subunit of DNA primase, an RNA polymerase that catalyzes the synthesis of short RNA molecules used as primers for DNA polymerase during DNA replication. The small subunit contains the primase catalytic core and has DNA synthesis activity on its own. Binding to the large subunit stabilizes and modulates the activity, increasing the rate of DNA synthesis while decreasing the length of the DNA fragments, and conferring RNA synthesis capability. The DNA polymerase activity may enable DNA primase to also catalyze primer extension after primer synthesis. May also play a role in DNA repair. The polypeptide is DNA primase small subunit PriS (Methanosarcina barkeri (strain Fusaro / DSM 804)).